Consider the following 287-residue polypeptide: ATP synthase gamma chain (287 aa).

The protein belongs to the ATPase gamma chain family. In terms of assembly, F-type ATPases have 2 components, CF(1) - the catalytic core - and CF(0) - the membrane proton channel. CF(1) has five subunits: alpha(3), beta(3), gamma(1), delta(1), epsilon(1). CF(0) has three main subunits: a, b and c.

The protein resides in the cell inner membrane. In terms of biological role, produces ATP from ADP in the presence of a proton gradient across the membrane. The gamma chain is believed to be important in regulating ATPase activity and the flow of protons through the CF(0) complex. The chain is ATP synthase gamma chain from Xylella fastidiosa (strain M12).